Consider the following 1066-residue polypeptide: Thyrotropin-releasing hormone-degrading ectoenzyme (1066 aa).

Basic and acidic residues predominate over residues 1-14 (MALDGERGEQEEEK). The tract at residues 1 to 43 (MALDGERGEQEEEKKKKKKKKKRKKKEEEGAEKSSSPFAATMG) is disordered. At 1–81 (MALDGERGEQ…ERHIAVHKRL (81 aa)) the chain is on the cytoplasmic side. Basic residues predominate over residues 15-25 (KKKKKKKKRKK). The residue at position 71 (T71) is a Phosphothreonine; by PKC. Residues 82 to 102 (VLAFAVSIVALLAVTMLAVLL) form a helical; Signal-anchor for type II membrane protein membrane-spanning segment. The Extracellular segment spans residues 103 to 1066 (SLRFDECGAS…FQWLGKAMRH (964 aa)). A disordered region spans residues 118–176 (TDGGLGGFPERDSNSSFPGSARRNHHAGGESSQRESGEVGTPGTPSAQPPSEEEREQWQ). N-linked (GlcNAc...) asparagine glycans are attached at residues N131, N202, N217, N264, and N380. 446–450 (AAMEN) contacts substrate. A Zn(2+)-binding site is contributed by H482. E483 (proton acceptor) is an active-site residue. Zn(2+) contacts are provided by H486 and E505. Residues N647, N676, N691, N705, N726, N842, and N948 are each glycosylated (N-linked (GlcNAc...) asparagine).

It belongs to the peptidase M1 family. Homodimer; disulfide-linked. Zn(2+) serves as cofactor.

The protein resides in the membrane. The catalysed reaction is Release of the N-terminal pyroglutamyl group from pGlu-|-His-Xaa tripeptides and pGlu-|-His-Xaa-Gly tetrapeptides.. Its function is as follows. Specific inactivation of TRH after its release. This Mus musculus (Mouse) protein is Thyrotropin-releasing hormone-degrading ectoenzyme (Trhde).